A 456-amino-acid chain; its full sequence is Tyrosine phenol-lyase (456 aa).

An N6-(pyridoxal phosphate)lysine modification is found at K257.

Belongs to the beta-eliminating lyase family. Homotetramer. Pyridoxal 5'-phosphate is required as a cofactor.

The enzyme catalyses L-tyrosine + H2O = phenol + pyruvate + NH4(+). The protein is Tyrosine phenol-lyase (tpl) of Citrobacter intermedius (Escherichia intermedia).